We begin with the raw amino-acid sequence, 164 residues long: Transcriptional regulator MraZ (164 aa).

SpoVT-AbrB domains are found at residues 7 to 63 (REQH…EPAV) and 92 to 135 (LDQL…NPDR).

This sequence belongs to the MraZ family. Forms oligomers.

It localises to the cytoplasm. The protein resides in the nucleoid. The sequence is that of Transcriptional regulator MraZ from Chlorobaculum parvum (strain DSM 263 / NCIMB 8327) (Chlorobium vibrioforme subsp. thiosulfatophilum).